A 143-amino-acid polypeptide reads, in one-letter code: Large ribosomal subunit protein uL11 (143 aa).

This sequence belongs to the universal ribosomal protein uL11 family. As to quaternary structure, part of the ribosomal stalk of the 50S ribosomal subunit. Interacts with L10 and the large rRNA to form the base of the stalk. L10 forms an elongated spine to which L12 dimers bind in a sequential fashion forming a multimeric L10(L12)X complex. Post-translationally, one or more lysine residues are methylated.

Its function is as follows. Forms part of the ribosomal stalk which helps the ribosome interact with GTP-bound translation factors. The sequence is that of Large ribosomal subunit protein uL11 from Burkholderia ambifaria (strain MC40-6).